Here is a 503-residue protein sequence, read N- to C-terminus: Transcription termination/antitermination protein NusA (503 aa).

The S1 motif domain maps to 139-203 (GDIINGIVKR…KGPQIFLSRV (65 aa)). The 71-residue stretch at 308 to 378 (SHKVEVVVSQ…LDVEEVIGQL (71 aa)) folds into the KH domain.

The protein belongs to the NusA family. Monomer. Binds directly to the core enzyme of the DNA-dependent RNA polymerase and to nascent RNA.

It is found in the cytoplasm. Participates in both transcription termination and antitermination. In Rickettsia prowazekii (strain Madrid E), this protein is Transcription termination/antitermination protein NusA.